Consider the following 515-residue polypeptide: Bifunctional purine biosynthesis protein PurH (515 aa).

Residues 1–145 (MTKRVLISVS…KNHASVTVVV (145 aa)) enclose the MGS-like domain.

It belongs to the PurH family.

It catalyses the reaction (6R)-10-formyltetrahydrofolate + 5-amino-1-(5-phospho-beta-D-ribosyl)imidazole-4-carboxamide = 5-formamido-1-(5-phospho-D-ribosyl)imidazole-4-carboxamide + (6S)-5,6,7,8-tetrahydrofolate. The enzyme catalyses IMP + H2O = 5-formamido-1-(5-phospho-D-ribosyl)imidazole-4-carboxamide. It functions in the pathway purine metabolism; IMP biosynthesis via de novo pathway; 5-formamido-1-(5-phospho-D-ribosyl)imidazole-4-carboxamide from 5-amino-1-(5-phospho-D-ribosyl)imidazole-4-carboxamide (10-formyl THF route): step 1/1. The protein operates within purine metabolism; IMP biosynthesis via de novo pathway; IMP from 5-formamido-1-(5-phospho-D-ribosyl)imidazole-4-carboxamide: step 1/1. The protein is Bifunctional purine biosynthesis protein PurH of Streptococcus pneumoniae serotype 19F (strain G54).